A 94-amino-acid polypeptide reads, in one-letter code: Pyrimidine/purine nucleoside phosphorylase (94 aa).

This sequence belongs to the nucleoside phosphorylase PpnP family.

It carries out the reaction a purine D-ribonucleoside + phosphate = a purine nucleobase + alpha-D-ribose 1-phosphate. The catalysed reaction is adenosine + phosphate = alpha-D-ribose 1-phosphate + adenine. The enzyme catalyses cytidine + phosphate = cytosine + alpha-D-ribose 1-phosphate. It catalyses the reaction guanosine + phosphate = alpha-D-ribose 1-phosphate + guanine. It carries out the reaction inosine + phosphate = alpha-D-ribose 1-phosphate + hypoxanthine. The catalysed reaction is thymidine + phosphate = 2-deoxy-alpha-D-ribose 1-phosphate + thymine. The enzyme catalyses uridine + phosphate = alpha-D-ribose 1-phosphate + uracil. It catalyses the reaction xanthosine + phosphate = alpha-D-ribose 1-phosphate + xanthine. Catalyzes the phosphorolysis of diverse nucleosides, yielding D-ribose 1-phosphate and the respective free bases. Can use uridine, adenosine, guanosine, cytidine, thymidine, inosine and xanthosine as substrates. Also catalyzes the reverse reactions. This chain is Pyrimidine/purine nucleoside phosphorylase, found in Citrobacter koseri (strain ATCC BAA-895 / CDC 4225-83 / SGSC4696).